Here is a 34-residue protein sequence, read N- to C-terminus: Photosystem II reaction center protein Psb30 (34 aa).

Residues 6–26 (VIGQLLSATLIVLAGPAVIFV) traverse the membrane as a helical segment.

Belongs to the Psb30/Ycf12 family. In terms of assembly, PSII is composed of 1 copy each of membrane proteins PsbA, PsbB, PsbC, PsbD, PsbE, PsbF, PsbH, PsbI, PsbJ, PsbK, PsbL, PsbM, PsbT, PsbX, PsbY, PsbZ, Psb30/Ycf12, peripheral proteins of the oxygen-evolving complex and a large number of cofactors. It forms dimeric complexes.

The protein resides in the plastid. The protein localises to the chloroplast thylakoid membrane. A core subunit of photosystem II (PSII), probably helps stabilize the reaction center. The polypeptide is Photosystem II reaction center protein Psb30 (Heterosigma akashiwo (strain NIES-293 / 8280G21-1)).